A 215-amino-acid polypeptide reads, in one-letter code: Vesicle-trafficking protein SEC22b (215 aa).

At M1 to R190 the chain is on the cytoplasmic side. Positions M6 to I119 constitute a Longin domain. The v-SNARE coiled-coil homology domain occupies N134–A194. Residues S191–W213 traverse the membrane as a helical segment. The Lumenal segment spans residues W214–L215.

Belongs to the synaptobrevin family. Component of 2 distinct SNARE complexes.

The protein resides in the endoplasmic reticulum membrane. It localises to the endoplasmic reticulum-Golgi intermediate compartment membrane. Its subcellular location is the golgi apparatus. The protein localises to the cis-Golgi network membrane. It is found in the trans-Golgi network membrane. The protein resides in the melanosome. In terms of biological role, SNARE involved in targeting and fusion of ER-derived transport vesicles with the Golgi complex as well as Golgi-derived retrograde transport vesicles with the ER. The chain is Vesicle-trafficking protein SEC22b from Xenopus tropicalis (Western clawed frog).